Reading from the N-terminus, the 649-residue chain is Serine/threonine-protein kinase par-4 (649 aa).

Residues 1–11 (MEGPSSSSVPT) show a composition bias toward polar residues. The interval 1–132 (MEGPSSSSVP…DEEAETPEEQ (132 aa)) is disordered. The segment covering 45-55 (NTEKMEKEKKP) has biased composition (basic and acidic residues). Acidic residues-rich tracts occupy residues 64 to 77 (PDYDYDEEDGGSCE) and 117 to 129 (DDMEDDDEEAETP). Residues 197–460 (YLWGGIIGTG…ISDVMQHPWF (264 aa)) enclose the Protein kinase domain. ATP contacts are provided by residues 203–211 (IGTGSYGKV) and Lys226. Residue Asp324 is the Proton acceptor of the active site. Residues 548 to 649 (TLEKRPGDGP…CIFRSRTDSS (102 aa)) are disordered. Residues 597-609 (AVEVVEAVAAPEA) are compositionally biased toward low complexity.

It belongs to the protein kinase superfamily. CAMK Ser/Thr protein kinase family. LKB1 subfamily. Mg(2+) is required as a cofactor. It depends on Mn(2+) as a cofactor.

It localises to the cytoplasm. The protein resides in the cell cortex. The catalysed reaction is L-seryl-[protein] + ATP = O-phospho-L-seryl-[protein] + ADP + H(+). The enzyme catalyses L-threonyl-[protein] + ATP = O-phospho-L-threonyl-[protein] + ADP + H(+). Its function is as follows. Required for cytoplasmic partitioning and asymmetric cell division in early embryogenesis. Phosphorylates and restricts the asymmetry effectors mex-5 and mex-6 to the anterior cytoplasm of the zygote and maintains these phosphorylations until fertilization. Phosphorylates and regulates aak-2 in response to oxidative stress. May also play a role in motility, behavioral response, regulation of lifespan and dauer formation through this pathway. This is Serine/threonine-protein kinase par-4 from Caenorhabditis briggsae.